A 152-amino-acid chain; its full sequence is MFRGVNQLNLDAKGRLAFPSRHRDRLLSHCSGEVVATIDYRDRCLVFYPLPEWEEIERKLIALPDLQPSAKRLKRLLIGHAQELQVDGNGRALVPPPLREYAGLEKRVVLIGQGNKFELWDESLWEQRRADWLQEAAAADAELPGELESLAL.

SpoVT-AbrB domains lie at 5–52 (VNQL…PLPE) and 81–124 (AQEL…DESL).

Belongs to the MraZ family. Forms oligomers.

Its subcellular location is the cytoplasm. The protein resides in the nucleoid. This is Transcriptional regulator MraZ from Halorhodospira halophila (strain DSM 244 / SL1) (Ectothiorhodospira halophila (strain DSM 244 / SL1)).